Reading from the N-terminus, the 253-residue chain is Type III pantothenate kinase (253 aa).

An ATP-binding site is contributed by 6–13; that stretch reads DVGNTNIV. Position 107–110 (107–110) interacts with substrate; it reads GADR. Residue aspartate 109 is the Proton acceptor of the active site. Aspartate 129 is a K(+) binding site. Threonine 132 provides a ligand contact to ATP. Threonine 184 contacts substrate.

Belongs to the type III pantothenate kinase family. As to quaternary structure, homodimer. NH4(+) is required as a cofactor. K(+) serves as cofactor.

The protein localises to the cytoplasm. The catalysed reaction is (R)-pantothenate + ATP = (R)-4'-phosphopantothenate + ADP + H(+). It functions in the pathway cofactor biosynthesis; coenzyme A biosynthesis; CoA from (R)-pantothenate: step 1/5. Catalyzes the phosphorylation of pantothenate (Pan), the first step in CoA biosynthesis. The sequence is that of Type III pantothenate kinase from Exiguobacterium sibiricum (strain DSM 17290 / CCUG 55495 / CIP 109462 / JCM 13490 / 255-15).